The sequence spans 54 residues: Large ribosomal subunit protein bL33A (54 aa).

This sequence belongs to the bacterial ribosomal protein bL33 family.

This chain is Large ribosomal subunit protein bL33A, found in Mycobacteroides abscessus (strain ATCC 19977 / DSM 44196 / CCUG 20993 / CIP 104536 / JCM 13569 / NCTC 13031 / TMC 1543 / L948) (Mycobacterium abscessus).